We begin with the raw amino-acid sequence, 789 residues long: Aconitate hydratase, mitochondrial (789 aa).

Residues Met1 to Ala32 constitute a mitochondrion transit peptide. Residues Gln106 and Asp199–His201 each bind substrate. [4Fe-4S] cluster-binding residues include Cys392, Cys455, and Cys458. Residues Arg481, Arg486, Arg613, and Ser676 to Arg677 contribute to the substrate site.

Belongs to the aconitase/IPM isomerase family. As to quaternary structure, monomer. The cofactor is [4Fe-4S] cluster.

Its subcellular location is the mitochondrion. The catalysed reaction is citrate = D-threo-isocitrate. It participates in carbohydrate metabolism; tricarboxylic acid cycle; isocitrate from oxaloacetate: step 2/2. In terms of biological role, catalyzes the isomerization of citrate to isocitrate via cis-aconitate, a step in the citric acid cycle. The polypeptide is Aconitate hydratase, mitochondrial (Schizosaccharomyces pombe (strain 972 / ATCC 24843) (Fission yeast)).